The chain runs to 416 residues: Serine hydroxymethyltransferase (416 aa).

Residues Leu118 and 122–124 (GHL) each bind (6S)-5,6,7,8-tetrahydrofolate. Lys226 is modified (N6-(pyridoxal phosphate)lysine). (6S)-5,6,7,8-tetrahydrofolate-binding positions include Glu242 and 350-352 (SPF).

The protein belongs to the SHMT family. In terms of assembly, homodimer. Requires pyridoxal 5'-phosphate as cofactor.

Its subcellular location is the cytoplasm. The enzyme catalyses (6R)-5,10-methylene-5,6,7,8-tetrahydrofolate + glycine + H2O = (6S)-5,6,7,8-tetrahydrofolate + L-serine. Its pathway is one-carbon metabolism; tetrahydrofolate interconversion. It functions in the pathway amino-acid biosynthesis; glycine biosynthesis; glycine from L-serine: step 1/1. Catalyzes the reversible interconversion of serine and glycine with tetrahydrofolate (THF) serving as the one-carbon carrier. This reaction serves as the major source of one-carbon groups required for the biosynthesis of purines, thymidylate, methionine, and other important biomolecules. Also exhibits THF-independent aldolase activity toward beta-hydroxyamino acids, producing glycine and aldehydes, via a retro-aldol mechanism. This chain is Serine hydroxymethyltransferase, found in Wolinella succinogenes (strain ATCC 29543 / DSM 1740 / CCUG 13145 / JCM 31913 / LMG 7466 / NCTC 11488 / FDC 602W) (Vibrio succinogenes).